Here is a 235-residue protein sequence, read N- to C-terminus: Protein GrpE (235 aa).

Positions 1-18 (MTDGNQKPDGNSGEQVTV) are enriched in polar residues. Disordered regions lie at residues 1–50 (MTDG…DAAH) and 198–235 (ESVDDGTAVADTAENDQADQGNSADTLGEQAESEPSGS). Over residues 19–35 (TDKRRIDPETGEVRHVP) the composition is skewed to basic and acidic residues.

This sequence belongs to the GrpE family. In terms of assembly, homodimer.

The protein localises to the cytoplasm. Its function is as follows. Participates actively in the response to hyperosmotic and heat shock by preventing the aggregation of stress-denatured proteins, in association with DnaK and GrpE. It is the nucleotide exchange factor for DnaK and may function as a thermosensor. Unfolded proteins bind initially to DnaJ; upon interaction with the DnaJ-bound protein, DnaK hydrolyzes its bound ATP, resulting in the formation of a stable complex. GrpE releases ADP from DnaK; ATP binding to DnaK triggers the release of the substrate protein, thus completing the reaction cycle. Several rounds of ATP-dependent interactions between DnaJ, DnaK and GrpE are required for fully efficient folding. The polypeptide is Protein GrpE (Mycobacterium bovis (strain BCG / Pasteur 1173P2)).